Consider the following 177-residue polypeptide: MSRVGKAPIALPKGAEVNVAAGVLSVKGPLGTLSQPIHSLVKVNVENDTLTFSPADESREANALQGTMRALVANMVKGVTTGFERKLNLVGVGYRAQLQGAALKLQLGFSHDVIHEMPEGVKAETPTQTEIIIKGADKQKVGQVAAEVRAYRPPEPYKGKGVRYSDERVILKETKKK.

Belongs to the universal ribosomal protein uL6 family. Part of the 50S ribosomal subunit.

Functionally, this protein binds to the 23S rRNA, and is important in its secondary structure. It is located near the subunit interface in the base of the L7/L12 stalk, and near the tRNA binding site of the peptidyltransferase center. This Cupriavidus necator (strain ATCC 17699 / DSM 428 / KCTC 22496 / NCIMB 10442 / H16 / Stanier 337) (Ralstonia eutropha) protein is Large ribosomal subunit protein uL6.